Here is a 558-residue protein sequence, read N- to C-terminus: Cyclomaltodextrinase (558 aa).

N143, G168, and D170 together coordinate Ca(2+). Substrate-binding residues include H243 and R323. The active-site Nucleophile is D325. E354 acts as the Proton donor in catalysis. Substrate contacts are provided by residues 420–421 (HD), D465, and R469.

This sequence belongs to the glycosyl hydrolase 13 family. In terms of assembly, monomer. Depending on the pH of the solution, exists as a monomer, a homodimer or as an assembly of six homodimers forming a dodecamer, which is catalytically the most efficient form of the enzyme. The cofactor is Ca(2+).

It carries out the reaction cyclomaltodextrin + H2O = linear maltodextrin. It catalyses the reaction Hydrolysis of pullulan to panose (6-alpha-D-glucosylmaltose).. Hydrolysis of beta-cyclodextrin is inhibited by Cu(2+), Zn(2+) and Ag(+), and activated by Ca(2+), EGTA and EDTA. Activity is increased over twofold in the presence of 5 mM EDTA. Competitively inhibited by acarbose and methyl 6-amino-6-deoxy-alpha-D-glucopyranoside by reducing the rate of the ring opening step of the reaction. Hydrolyzes alpha-, beta- and gamma-cyclodextrins and the resulting linear maltodextrins, with the highest activity with beta-cyclodextrin (cyclomaltoheptaose). Soluble starch is hydrolyzed slowly, but it is nevertheless preferred over pullulan as a substrate. Is able to hydrolyze amylose and amylopectin, with a very strong preference for amylose, with maltose and glucose as the main products. Maltose and glucose are the main hydrolysis products of cyclomaltodextrins, maltodextrins and starch, whereas panose is the main hydrolysis product of pullulan. Acarbose is partially hydrolyzed to glucose and pseudotrisaccharide. No activity with maltose as substrate. Has transglycosylating activity with high concentrations of maltotriose, maltotetraose and starch. The polypeptide is Cyclomaltodextrinase (Bacillus sp).